Reading from the N-terminus, the 495-residue chain is DNA double-strand break repair helicase HerA (495 aa).

Residues Arg142, 151 to 156 (GSGKSN), and 459 to 460 (KI) contribute to the ATP site.

This sequence belongs to the HerA family. Interacts with Rad50 and Mre11.

The catalysed reaction is Couples ATP hydrolysis with the unwinding of duplex DNA at the replication fork by translocating in the 5'-3' direction. This creates two antiparallel DNA single strands (ssDNA). The leading ssDNA polymer is the template for DNA polymerase III holoenzyme which synthesizes a continuous strand.. It catalyses the reaction ATP + H2O = ADP + phosphate + H(+). It carries out the reaction Couples ATP hydrolysis with the unwinding of duplex DNA by translocating in the 3'-5' direction.. Its activity is regulated as follows. ATPase activity is slightly stimulated by either circular single- or double-stranded (ds)DNA with a weak preference for dsDNA. Functionally, involved in DNA double-strand break (DSB) repair. Probably acts with NurA to stimulate resection of the 5' strand and produce the long 3' single-strand that is required for RadA loading. Has DNA-dependent ATPase activity and bidirectional DNA helicase activity. Loads on either a 3' or a 5' DNA tail for subsequent DNA unwinding; has no activity on blunt-end DNA. The sequence is that of DNA double-strand break repair helicase HerA from Sulfolobus acidocaldarius (strain ATCC 33909 / DSM 639 / JCM 8929 / NBRC 15157 / NCIMB 11770).